Here is a 693-residue protein sequence, read N- to C-terminus: Sodium-dependent dopamine transporter (693 aa).

Topologically, residues 1–56 (MSEGRCSVAHMSSVVAPAKEANAMGPKAVELVLVKEQNGVQLTNSTLLNPPQSPTE) are cytoplasmic. The chain crosses the membrane as a discontinuously helical span at residues 57–95 (AQDRETWSKKADFLLSVIGFAVDLANVWRFPYLCYKNGG). 5 residues coordinate Na(+): Gly75, Ala77, Val78, Asp79, and Asn82. Residue Asp79 participates in dopamine binding. The next 2 helical transmembrane spans lie at 96–127 (GAFL…NREG) and 128–171 (AAGV…LSSF). 2 residues coordinate dopamine: Ser149 and Gly153. Over 172 to 233 (TTELPWTHCN…SQGIDDLGPP (62 aa)) the chain is Extracellular. Cysteines 180 and 189 form a disulfide. 3 N-linked (GlcNAc...) asparagine glycosylation sites follow: Asn181, Asn196, and Asn202. Helical transmembrane passes span 234–253 (RWQL…FSLW) and 254–284 (KGVK…GITL). Residues 285–303 (PGAVDAIRAYLSVDFHRLC) lie on the Extracellular side of the membrane. A discontinuously helical transmembrane segment spans residues 304-332 (EASVWIDAAIQICFSLGVGLGVLIAFSSY). Position 314 (Gln314) interacts with chloride. Phe317 is a dopamine binding site. Ser318 and Asn350 together coordinate Na(+). Ser318 provides a ligand contact to chloride. Residues 333–373 (NKFTNNCYRDAIITTSVNSLTSFSSGFVVFSFLGYMAQKHS) form a helical membrane-spanning segment. Ser354 provides a ligand contact to chloride. Residues 374–397 (VPIGDVAKDGPGLIFIIYPEALAT) lie on the Extracellular side of the membrane. 3 consecutive transmembrane segments (helical) span residues 398 to 439 (LPLS…QLLH), 440 to 463 (RHRE…CVTN), and 464 to 496 (GGIY…AWFY). Residues Leu415, Asp418, and Ser419 each coordinate Na(+). 2 residues coordinate dopamine: Ser419 and Ala420. The Cytoplasmic portion of the chain corresponds to 497–513 (GVWQFSDDIKQMTGRRP). The chain crosses the membrane as a helical span at residues 514–539 (SLYWRLCWKFVSPCFLLFVVVVSIAT). Over 540–550 (FRPPHYGAYVF) the chain is Extracellular. Residues 551 to 580 (PEWATALGWAIAASSMSVVPIYAAYKLCSL) traverse the membrane as a helical segment. Residues 558 to 587 (GWAIAASSMSVVPIYAAYKLCSLPGSSREK) are interaction with TGFB1I1. Residues 581-693 (PGSSREKLAY…VESTGLCSVY (113 aa)) are Cytoplasmic-facing.

Belongs to the sodium:neurotransmitter symporter (SNF) (TC 2.A.22) family. SLC6A3 subfamily. As to quaternary structure, monomer. Homooligomer; disulfide-linked. Interacts with PRKCABP and TGFB1I1. Interacts (via N-terminus) with SYNGR3 (via N-terminus). Interacts with SLC18A2. Interacts with TOR1A (ATP-bound); TOR1A regulates SLC6A3 subcellular location. Interacts with alpha-synuclein/SNCA. Interacts with SEPTIN4. In terms of tissue distribution, expressed in the neurons of the substantia nigra of the brain.

The protein resides in the cell membrane. It is found in the cell projection. Its subcellular location is the neuron projection. The protein localises to the axon. The catalysed reaction is dopamine(out) + chloride(out) + Na(+)(out) = dopamine(in) + chloride(in) + Na(+)(in). It catalyses the reaction (R)-noradrenaline(out) + chloride(out) + Na(+)(out) = (R)-noradrenaline(in) + chloride(in) + Na(+)(in). The enzyme catalyses dopamine(out) + chloride(out) + 2 Na(+)(out) = dopamine(in) + chloride(in) + 2 Na(+)(in). With respect to regulation, inhibited by GBR 12909 dihydrochloride, amphetamine and cocaine. Inhibited by zinc ions. Mediates sodium- and chloride-dependent transport of dopamine. Also mediates sodium- and chloride-dependent transport of norepinephrine (also known as noradrenaline). Regulator of light-dependent retinal hyaloid vessel regression, downstream of OPN5 signaling. In Bos taurus (Bovine), this protein is Sodium-dependent dopamine transporter (SLC6A3).